The sequence spans 1891 residues: Protein TIC 214 (1891 aa).

6 helical membrane-spanning segments follow: residues Ile18 to Gly38, Phe64 to Leu84, Pro87 to His107, Leu124 to Leu144, Val172 to Ile192, and Ile221 to Ile241. 3 disordered regions span residues Glu248–Asp300, Glu788–Arg807, and Lys1580–Pro1607. Residues Val256–Thr268 are compositionally biased toward acidic residues. The span at Arg1582–Asn1601 shows a compositional bias: basic and acidic residues.

It belongs to the TIC214 family. As to quaternary structure, part of the Tic complex.

It localises to the plastid. The protein localises to the chloroplast inner membrane. Functionally, involved in protein precursor import into chloroplasts. May be part of an intermediate translocation complex acting as a protein-conducting channel at the inner envelope. This chain is Protein TIC 214, found in Solanum lycopersicum (Tomato).